The chain runs to 88 residues: ATP synthase epsilon chain (88 aa).

This sequence belongs to the ATPase epsilon chain family. In terms of assembly, F-type ATPases have 2 components, CF(1) - the catalytic core - and CF(0) - the membrane proton channel. CF(1) has five subunits: alpha(3), beta(3), gamma(1), delta(1), epsilon(1). CF(0) has three main subunits: a, b and c.

It localises to the cell inner membrane. Its function is as follows. Produces ATP from ADP in the presence of a proton gradient across the membrane. The sequence is that of ATP synthase epsilon chain (atpC) from Chlorobaculum tepidum (strain ATCC 49652 / DSM 12025 / NBRC 103806 / TLS) (Chlorobium tepidum).